Here is a 317-residue protein sequence, read N- to C-terminus: MRFISTVTKRRPFQAPNDLVHPLSNILGSLVTYDSRLHLPQPKDRQCSTLVPLYRRLLKATRRFWDPMASQILISHFQAYARKARKSNPNPHKRRIKRFRNLLKTFACRIERANDGDHQAIWQTLRYAYSQTGPLRHRRLHYLQDNKIRPSKIPKSLPSNSPVRLPYISSLLSAVFEINMENAKIRHLPSVIFDGLIEKNKDRPYHINLSCKRAYDELLPRIAVPLLPHEYHHLHSLLLDVTLRNPQISRPPFAPLNPRKGFCRILQRSLITFLSAVCYLPYNPHPTSKPVVSWDSLSDIQLRLNVGKVLKKSVKKR.

This is an uncharacterized protein from Schizosaccharomyces pombe (strain 972 / ATCC 24843) (Fission yeast).